We begin with the raw amino-acid sequence, 702 residues long: Phosphoglycerol transferase I (702 aa).

The next 3 helical transmembrane spans lie at 2–22 (HWIL…SPRL), 71–91 (FSGY…PLML), and 103–123 (GGAV…VSPV).

It belongs to the OpgB family.

The protein localises to the cell inner membrane. The enzyme catalyses a phosphatidylglycerol + a membrane-derived-oligosaccharide D-glucose = a 1,2-diacyl-sn-glycerol + a membrane-derived-oligosaccharide 6-(glycerophospho)-D-glucose.. It participates in glycan metabolism; osmoregulated periplasmic glucan (OPG) biosynthesis. In terms of biological role, transfers a phosphoglycerol residue from phosphatidylglycerol to the membrane-bound nascent glucan backbones. The polypeptide is Phosphoglycerol transferase I (Xanthomonas campestris pv. campestris (strain B100)).